Here is a 423-residue protein sequence, read N- to C-terminus: Serpin B12 (423 aa).

Basic and acidic residues predominate over residues 63 to 72 (LSKDEHKEPN). A disordered region spans residues 63–106 (LSKDEHKEPNDPSPQSESKASDSSLEGQKQTSASQDQQGESTND). Residues 75 to 106 (SPQSESKASDSSLEGQKQTSASQDQQGESTND) show a composition bias toward polar residues.

It belongs to the serpin family. Ov-serpin subfamily. As to quaternary structure, interacts with SLFN12; as part of a pathway regulating cell differentiation.

The protein localises to the cytoplasm. Its function is as follows. Inhibits trypsin and plasmin, but not thrombin, coagulation factor Xa, or urokinase-type plasminogen activator. May play a role in cell differentiation. This is Serpin B12 (Serpinb12) from Mus musculus (Mouse).